The chain runs to 342 residues: Terpene cyclase resF (342 aa).

Helical transmembrane passes span valine 5–alanine 25, phenylalanine 81–phenylalanine 101, tryptophan 115–phenylalanine 135, serine 151–phenylalanine 171, and isoleucine 182–leucine 202. An N-linked (GlcNAc...) asparagine glycan is attached at asparagine 224. Helical transmembrane passes span tyrosine 229–glycine 249, phenylalanine 269–leucine 289, and tyrosine 305–leucine 325.

This sequence belongs to the membrane-bound ascI terpene cyclase family.

Its subcellular location is the membrane. The protein operates within antifungal biosynthesis. Cyclase; part of the gene cluster that mediates the biosynthesis of the tetrahydropyranyl antifungal agent restricticin that acts as an inhibitor of CYP51 and blocks the ergosterol biosynthesis. The highly reducing polyketide synthase resH, the short chain dehydrogenase resG, the cyclase resF, the FAD-dependent monooxygenase resA and the enoylreductase resD are required to generate the first stable intermediate desmethylrestrictinol. ResH with resD biosynthesize the first polyketide chain intermediate that is reduced by resG, followed by epoxidation by resA before 6-endo cyclization via epoxide opening by resF leads to desmethylrestrictinol. The methyltransferase resE then catalyzes the C4 O-methylation of desmethylrestrictinol to produce restrictinol, and the nonribosomal peptide synthetase resC catalyzes the C3 esterification of restrictinol with glycine that leads to restricticin. In Aspergillus sclerotiorum, this protein is Terpene cyclase resF.